The chain runs to 347 residues: Probable dual-specificity RNA methyltransferase RlmN (347 aa).

The Proton acceptor role is filled by E90. Positions 96–326 constitute a Radical SAM core domain; it reads YKHGNSICIS…VTVRREMGSD (231 aa). C103 and C331 are disulfide-bonded. Positions 110, 114, and 117 each coordinate [4Fe-4S] cluster. S-adenosyl-L-methionine is bound by residues 157-158, S189, 212-214, and N288; these read GE and SLH. Residue C331 is the S-methylcysteine intermediate of the active site.

It belongs to the radical SAM superfamily. RlmN family. [4Fe-4S] cluster serves as cofactor.

It is found in the cytoplasm. It carries out the reaction adenosine(2503) in 23S rRNA + 2 reduced [2Fe-2S]-[ferredoxin] + 2 S-adenosyl-L-methionine = 2-methyladenosine(2503) in 23S rRNA + 5'-deoxyadenosine + L-methionine + 2 oxidized [2Fe-2S]-[ferredoxin] + S-adenosyl-L-homocysteine. It catalyses the reaction adenosine(37) in tRNA + 2 reduced [2Fe-2S]-[ferredoxin] + 2 S-adenosyl-L-methionine = 2-methyladenosine(37) in tRNA + 5'-deoxyadenosine + L-methionine + 2 oxidized [2Fe-2S]-[ferredoxin] + S-adenosyl-L-homocysteine. Specifically methylates position 2 of adenine 2503 in 23S rRNA and position 2 of adenine 37 in tRNAs. The chain is Probable dual-specificity RNA methyltransferase RlmN from Clostridium botulinum (strain Alaska E43 / Type E3).